The primary structure comprises 76 residues: FMRFamide-related neuropeptides (76 aa).

The N-terminal stretch at M1–A27 is a signal peptide. The residue at position 39 (F39) is a Phenylalanine amide.

This sequence belongs to the FARP (FMRFamide related peptide) family. As to expression, olfactory lobe and accessory lobe, olfactory globular tract, olfactory lobe cells (at protein level). Widely distributed throughout nervous system.

It localises to the secreted. GYRKPPFNGSIF-amide may be involved in olfaction and contraction of hindgut. The sequence is that of FMRFamide-related neuropeptides from Procambarus clarkii (Red swamp crayfish).